The following is a 160-amino-acid chain: SsrA-binding protein (160 aa).

The tract at residues 134 to 160 is disordered; sequence YDKRDTERERDSNRELHRAVRNKGKED.

Belongs to the SmpB family.

It localises to the cytoplasm. Required for rescue of stalled ribosomes mediated by trans-translation. Binds to transfer-messenger RNA (tmRNA), required for stable association of tmRNA with ribosomes. tmRNA and SmpB together mimic tRNA shape, replacing the anticodon stem-loop with SmpB. tmRNA is encoded by the ssrA gene; the 2 termini fold to resemble tRNA(Ala) and it encodes a 'tag peptide', a short internal open reading frame. During trans-translation Ala-aminoacylated tmRNA acts like a tRNA, entering the A-site of stalled ribosomes, displacing the stalled mRNA. The ribosome then switches to translate the ORF on the tmRNA; the nascent peptide is terminated with the 'tag peptide' encoded by the tmRNA and targeted for degradation. The ribosome is freed to recommence translation, which seems to be the essential function of trans-translation. The protein is SsrA-binding protein of Pseudomonas fluorescens (strain SBW25).